The following is a 150-amino-acid chain: Interferon antagonist OPG027 (150 aa).

Belongs to the orthopoxvirus OPG027 family.

Its function is as follows. Inhibits antiviral activity induced by type I interferons. Does not block signal transduction of IFN, but is important to counteract the host antiviral state induced by a pre-treatment with IFN. The protein is Interferon antagonist OPG027 (OPG027) of Cynomys gunnisoni (Gunnison's prairie dog).